A 311-amino-acid polypeptide reads, in one-letter code: Mitochondrial ribosome-associated GTPase 1 (311 aa).

In terms of domain architecture, CP-type G spans 27–200; that stretch reads AKGLKQMKTK…LFDTPGVLSP (174 aa). Residues 74-77, 144-149, and Gly196 contribute to the GTP site; these read NKMD and NVGKSS.

It belongs to the TRAFAC class YlqF/YawG GTPase family. MTG1 subfamily.

The protein resides in the mitochondrion inner membrane. Functionally, plays a role in the regulation of the mitochondrial ribosome assembly and of translational activity. Displays mitochondrial GTPase activity. The polypeptide is Mitochondrial ribosome-associated GTPase 1 (Xenopus tropicalis (Western clawed frog)).